A 276-amino-acid polypeptide reads, in one-letter code: Natural cytotoxicity triggering receptor 2 (276 aa).

A signal peptide spans 1-21 (MAWRALHPLLLLLLLFPGSQA). The Ig-like domain maps to 22 to 120 (QSKAQVLQSV…IYRPSDNSVS (99 aa)). Topologically, residues 22–192 (QSKAQVLQSV…LRPGPAAPIA (171 aa)) are extracellular. 2 disulfides stabilise this stretch: Cys-40-Cys-109 and Cys-55-Cys-63. 2 stretches are compositionally biased toward polar residues: residues 138–156 (TSWT…QSCV) and 167–183 (ESPS…NSTL). Residues 138-184 (TSWTPRDLVSSQTQTQSCVPPTAGARQAPESPSTIPVPSQPQNSTLR) form a disordered region. Asn-180 is a glycosylation site (N-linked (GlcNAc...) asparagine). The helical transmembrane segment at 193–213 (LVPVFCGLLVAKSLVLSALLV) threads the bilayer. At 214–276 (WWGDIWWKTM…ISDDDDEHTL (63 aa)) the chain is on the cytoplasmic side.

It belongs to the natural cytotoxicity receptor (NCR) family. As to quaternary structure, interacts with TYROBP/DAP12. Interacts with KMT2E isoform NKp44L. Selectively expressed by activated NK cells and by in vitro cultured (i.e. activated) TCRg/d lymphoid cells.

The protein resides in the cell membrane. Its function is as follows. Cytotoxicity-activating receptor that may contribute to the increased efficiency of activated natural killer (NK) cells to mediate tumor cell lysis. This Homo sapiens (Human) protein is Natural cytotoxicity triggering receptor 2 (NCR2).